An 86-amino-acid chain; its full sequence is MHAYVYKSQRKQDTFVYLATRDDFSVIPADVQARLAPFAFVLDAALTPERRLAQADADTVRAALASHGFYLQLPKTVVLAGECDYD.

One can recognise a YcgL domain in the interval M1 to C83.

This Xanthomonas campestris pv. campestris (strain ATCC 33913 / DSM 3586 / NCPPB 528 / LMG 568 / P 25) protein is YcgL domain-containing protein XCC3997.